A 124-amino-acid polypeptide reads, in one-letter code: Small ribosomal subunit protein uS12 (124 aa).

Asp89 carries the post-translational modification 3-methylthioaspartic acid. Lys108 carries the post-translational modification N6-acetyllysine.

This sequence belongs to the universal ribosomal protein uS12 family. In terms of assembly, part of the 30S ribosomal subunit. Contacts proteins S8 and S17. May interact with IF1 in the 30S initiation complex.

Functionally, with S4 and S5 plays an important role in translational accuracy. In terms of biological role, interacts with and stabilizes bases of the 16S rRNA that are involved in tRNA selection in the A site and with the mRNA backbone. Located at the interface of the 30S and 50S subunits, it traverses the body of the 30S subunit contacting proteins on the other side and probably holding the rRNA structure together. The combined cluster of proteins S8, S12 and S17 appears to hold together the shoulder and platform of the 30S subunit. In Escherichia coli O6:K15:H31 (strain 536 / UPEC), this protein is Small ribosomal subunit protein uS12.